Reading from the N-terminus, the 146-residue chain is Large ribosomal subunit protein bL9 (146 aa).

The protein belongs to the bacterial ribosomal protein bL9 family.

Binds to the 23S rRNA. The sequence is that of Large ribosomal subunit protein bL9 from Deinococcus geothermalis (strain DSM 11300 / CIP 105573 / AG-3a).